Consider the following 208-residue polypeptide: Putative RING finger protein 413R (208 aa).

The interval 1–87 is disordered; it reads MDAIFYPLPI…RHWSDDDSDR (87 aa). Positions 22–71 are enriched in acidic residues; the sequence is DFQEEDFQEEDFQEEDFQEEDFQEEDEDEEDEEVNEYPSDLDDEYPDSDY. A compositionally biased stretch (basic and acidic residues) spans 72–82; the sequence is YDERSDRHWSD. A coiled-coil region spans residues 83 to 147; that stretch reads DDSDRDLDDL…KLTTLSKNLT (65 aa). The RING-type zinc-finger motif lies at 148–196; the sequence is CIICLTNQVQILTIPCGHLIMCNPCSLNLNNSVCTRGVNSNYEKCPKCR.

The sequence is that of Putative RING finger protein 413R (EF2) from Acheta domesticus (House cricket).